The chain runs to 465 residues: ATP-dependent rRNA helicase rrp3 (465 aa).

Over residues 1–22 (MAPSEKKLTEDKKNSSLNKKIE) the composition is skewed to basic and acidic residues. Positions 1-44 (MAPSEKKLTEDKKNSSLNKKIETSNSSSEKSSENNNGDSQNNEA) are disordered. The span at 23–36 (TSNSSSEKSSENNN) shows a compositional bias: low complexity. The short motif at 46-74 (KTFKELGVIDELCEACEKLGFKTPTPIQQ) is the Q motif element. One can recognise a Helicase ATP-binding domain in the interval 77 to 248 (IPVVLNKRDV…RASLHQPVRV (172 aa)). ATP is bound at residue 90 to 97 (AQTGSGKT). The DEAD box motif lies at 196 to 199 (DEAD). Residues 275 to 419 (YLVYLVNELA…EYEIDKEGVF (145 aa)) form the Helicase C-terminal domain. Residues 442–453 (RRKSKGKLHTKR) show a composition bias toward basic residues. The tract at residues 442–465 (RRKSKGKLHTKRKRDDLDREEQIY) is disordered. Residues 454-465 (KRDDLDREEQIY) are compositionally biased toward basic and acidic residues.

The protein belongs to the DEAD box helicase family. DDX47/RRP3 subfamily. Interacts with the SSU processome.

It localises to the nucleus. It catalyses the reaction ATP + H2O = ADP + phosphate + H(+). ATP-dependent rRNA helicase required for pre-ribosomal RNA processing. Involved in the maturation of the 35S-pre-rRNA and to its cleavage to mature 18S rRNA. The polypeptide is ATP-dependent rRNA helicase rrp3 (Schizosaccharomyces pombe (strain 972 / ATCC 24843) (Fission yeast)).